Reading from the N-terminus, the 434-residue chain is Eukaryotic translation initiation factor 3 subunit E (434 aa).

The region spanning 219 to 392 (FFNHPKGRDL…GHVVMGTQPL (174 aa)) is the PCI domain.

The protein belongs to the eIF-3 subunit E family. Component of the eukaryotic translation initiation factor 3 (eIF-3) complex. The eIF-3 complex interacts with pix. Interacts with mxt.

Its subcellular location is the cytoplasm. Its function is as follows. Component of the eukaryotic translation initiation factor 3 (eIF-3) complex, which is involved in protein synthesis of a specialized repertoire of mRNAs and, together with other initiation factors, stimulates binding of mRNA and methionyl-tRNAi to the 40S ribosome. The eIF-3 complex specifically targets and initiates translation of a subset of mRNAs involved in cell proliferation. This Drosophila pseudoobscura pseudoobscura (Fruit fly) protein is Eukaryotic translation initiation factor 3 subunit E (eIF3-S6).